Reading from the N-terminus, the 221-residue chain is Ribonuclease T (221 aa).

An Exonuclease domain is found at Val21 to Phe195. Mg(2+) contacts are provided by Asp24, Glu26, His182, and Asp187. His182 functions as the Proton donor/acceptor in the catalytic mechanism.

The protein belongs to the RNase T family. In terms of assembly, homodimer. It depends on Mg(2+) as a cofactor.

In terms of biological role, trims short 3' overhangs of a variety of RNA species, leaving a one or two nucleotide 3' overhang. Responsible for the end-turnover of tRNA: specifically removes the terminal AMP residue from uncharged tRNA (tRNA-C-C-A). Also appears to be involved in tRNA biosynthesis. This chain is Ribonuclease T, found in Buchnera aphidicola subsp. Cinara cedri (strain Cc).